The following is a 134-amino-acid chain: T-cell receptor beta chain V region CTL-F3 (134 aa).

An N-terminal signal peptide occupies residues 1 to 19 (MAPRLLFCLVLCFLRAEPT). The tract at residues 20 to 115 (NAGVIQTPRH…SAVYLCASSL (96 aa)) is v segment. Cys42 and Cys111 are disulfide-bonded. Asn90 carries N-linked (GlcNAc...) asparagine glycosylation. Residues 116 to 119 (STGV) form a d segment region. Residues 120–134 (SYEQYFGPGTRLTVL) are j segment.

The polypeptide is T-cell receptor beta chain V region CTL-F3 (Mus musculus (Mouse)).